Reading from the N-terminus, the 539-residue chain is GMP synthase [glutamine-hydrolyzing] (539 aa).

The Glutamine amidotransferase type-1 domain occupies 4-202; sequence KILILDFGSQ…VLQIAGAKPD (199 aa). The active-site Nucleophile is the Cys81. Active-site residues include His176 and Glu178. The 193-residue stretch at 203 to 395 folds into the GMPS ATP-PPase domain; that stretch reads WIMSNHIEEA…LGLPPEMVYR (193 aa). 230 to 236 contacts ATP; that stretch reads SGGVDSS.

Homodimer.

It carries out the reaction XMP + L-glutamine + ATP + H2O = GMP + L-glutamate + AMP + diphosphate + 2 H(+). It participates in purine metabolism; GMP biosynthesis; GMP from XMP (L-Gln route): step 1/1. In terms of biological role, catalyzes the synthesis of GMP from XMP. The polypeptide is GMP synthase [glutamine-hydrolyzing] (Burkholderia ambifaria (strain ATCC BAA-244 / DSM 16087 / CCUG 44356 / LMG 19182 / AMMD) (Burkholderia cepacia (strain AMMD))).